The following is a 139-amino-acid chain: 10 kDa chaperonin 2, chloroplastic (139 aa).

Residues M1 to R39 constitute a chloroplast transit peptide. The interval K51 to V138 is cpn-10 domain.

It belongs to the GroES chaperonin family. Expressed in leaves and stems. Expressed at low levels in germinating seeds, seedlings, rosettes leaves, flowers and siliques.

It is found in the plastid. Its subcellular location is the chloroplast stroma. Functions as a co-chaperone for protein folding in chloroplasts. The protein is 10 kDa chaperonin 2, chloroplastic of Arabidopsis thaliana (Mouse-ear cress).